We begin with the raw amino-acid sequence, 71 residues long: Small ribosomal subunit protein bS21 (71 aa).

Residues 37 to 71 form a disordered region; it reads HYEKPTAERKRKKAAAVKRHMKKLSRDNARRVKLY. Residues 45 to 59 are compositionally biased toward basic residues; it reads RKRKKAAAVKRHMKK. Residues 60–71 are compositionally biased toward basic and acidic residues; sequence LSRDNARRVKLY.

The protein belongs to the bacterial ribosomal protein bS21 family.

This chain is Small ribosomal subunit protein bS21, found in Pseudoalteromonas translucida (strain TAC 125).